The primary structure comprises 321 residues: Beta-ketoacyl-[acyl-carrier-protein] synthase III (321 aa).

Catalysis depends on residues Cys114 and His248. Residues 249–253 (QANIR) are ACP-binding. Asn278 is a catalytic residue.

This sequence belongs to the thiolase-like superfamily. FabH family. As to quaternary structure, homodimer.

It is found in the cytoplasm. It carries out the reaction malonyl-[ACP] + acetyl-CoA + H(+) = 3-oxobutanoyl-[ACP] + CO2 + CoA. It participates in lipid metabolism; fatty acid biosynthesis. Catalyzes the condensation reaction of fatty acid synthesis by the addition to an acyl acceptor of two carbons from malonyl-ACP. Catalyzes the first condensation reaction which initiates fatty acid synthesis and may therefore play a role in governing the total rate of fatty acid production. Possesses both acetoacetyl-ACP synthase and acetyl transacylase activities. Its substrate specificity determines the biosynthesis of branched-chain and/or straight-chain of fatty acids. The polypeptide is Beta-ketoacyl-[acyl-carrier-protein] synthase III (Methylococcus capsulatus (strain ATCC 33009 / NCIMB 11132 / Bath)).